Here is a 119-residue protein sequence, read N- to C-terminus: Ribonuclease pancreatic (119 aa).

Pyrrolidone carboxylic acid is present on Q1. Catalysis depends on H10, which acts as the Proton acceptor. Cystine bridges form between C25-C80, C39-C91, and C57-C106. Residue 40–44 coordinates substrate; the sequence is KTRNT. The Proton donor role is filled by H113.

It belongs to the pancreatic ribonuclease family. In terms of assembly, monomer. Interacts with and forms tight 1:1 complexes with RNH1. Dimerization of two such complexes may occur. Interaction with RNH1 inhibits this protein. Pancreas.

The protein localises to the secreted. It carries out the reaction an [RNA] containing cytidine + H2O = an [RNA]-3'-cytidine-3'-phosphate + a 5'-hydroxy-ribonucleotide-3'-[RNA].. The catalysed reaction is an [RNA] containing uridine + H2O = an [RNA]-3'-uridine-3'-phosphate + a 5'-hydroxy-ribonucleotide-3'-[RNA].. Its function is as follows. Endonuclease that catalyzes the cleavage of RNA on the 3' side of pyrimidine nucleotides. Acts on single-stranded and double-stranded RNA. The polypeptide is Ribonuclease pancreatic (Iguana iguana (Common iguana)).